The chain runs to 843 residues: Tetratricopeptide repeat protein 7B (843 aa).

One copy of the TPR 1 repeat lies at 97–131; that stretch reads QESNLVMAKLTYVEGDYKEALNIYARVGLDDLPLT. S160 and S202 each carry phosphoserine. TPR repeat units lie at residues 219–252, 363–396, 397–430, 479–514, 516–548, and 549–582; these read ETGL…VETR, SVVY…AFEE, FHLW…KPDD, TYSL…SPTD, QAAF…QGDD, and ANSL…YPEN. A phosphoserine mark is found at S625, S629, S630, S673, S677, S678, and S681. TPR repeat units follow at residues 696-729, 730-763, 765-797, and 798-831; these read AQIW…FPMS, HNVL…SPTH, KSMQ…NSTA, and HEVW…EASS.

In terms of assembly, component of a phosphatidylinositol 4-kinase (PI4K) complex, composed of PI4KA, EFR3 (EFR3A or EFR3B), TTC7 (TTC7A or TTC7B) and HYCC (HYCC1 or HYCC2). Interacts with PI4KA, interaction is direct. Interacts with EFR3 (EFR3A or EFR3B), interaction is direct. Interacts with HYCC (HYCC1 or HYCC2), interaction is direct. Association with the PI4K complex is strongly reduced by TMEM150A.

It is found in the cytoplasm. It localises to the cytosol. The protein resides in the cell membrane. Its function is as follows. Component of a complex required to localize phosphatidylinositol 4-kinase (PI4K) to the plasma membrane. The complex acts as a regulator of phosphatidylinositol 4-phosphate (PtdIns(4)P) synthesis. In the complex, plays a central role in bridging PI4KA to EFR3B and HYCC1, via direct interactions. The sequence is that of Tetratricopeptide repeat protein 7B from Mus musculus (Mouse).